Here is a 518-residue protein sequence, read N- to C-terminus: UDP-N-acetylmuramate--L-alanine ligase (518 aa).

158–164 (GTHGKTT) lines the ATP pocket.

Belongs to the MurCDEF family.

It localises to the cytoplasm. It catalyses the reaction UDP-N-acetyl-alpha-D-muramate + L-alanine + ATP = UDP-N-acetyl-alpha-D-muramoyl-L-alanine + ADP + phosphate + H(+). Its pathway is cell wall biogenesis; peptidoglycan biosynthesis. Cell wall formation. The chain is UDP-N-acetylmuramate--L-alanine ligase from Crocosphaera subtropica (strain ATCC 51142 / BH68) (Cyanothece sp. (strain ATCC 51142)).